Reading from the N-terminus, the 299-residue chain is tRNA(Met) cytidine acetate ligase (299 aa).

ATP is bound by residues I6–M19, G100, N157, and R182.

This sequence belongs to the TmcAL family.

The protein localises to the cytoplasm. The catalysed reaction is cytidine(34) in elongator tRNA(Met) + acetate + ATP = N(4)-acetylcytidine(34) in elongator tRNA(Met) + AMP + diphosphate. Its function is as follows. Catalyzes the formation of N(4)-acetylcytidine (ac(4)C) at the wobble position of elongator tRNA(Met), using acetate and ATP as substrates. First activates an acetate ion to form acetyladenylate (Ac-AMP) and then transfers the acetyl group to tRNA to form ac(4)C34. The chain is tRNA(Met) cytidine acetate ligase from Mycoplasma mobile (strain ATCC 43663 / 163K / NCTC 11711) (Mesomycoplasma mobile).